We begin with the raw amino-acid sequence, 606 residues long: Large subunit GTPase 1 homolog (606 aa).

Positions 1–21 (MGKKNKGGAPNLGRQLIKDRF) are disordered. A CP-type G domain is found at 165–395 (WRQLWRVVER…LCDCPGLVMP (231 aa)). Residue 213 to 216 (NKSD) participates in GTP binding. Phosphoserine is present on residues serine 276 and serine 279. Residues 344–351 (GYPNVGKS) and 388–391 (DCPG) contribute to the GTP site. The tract at residues 574–606 (LVAGNDPAAKPWRHVKKERREKLRKKFSHLDEH) is disordered. Residues 584–600 (PWRHVKKERREKLRKKF) are compositionally biased toward basic residues.

This sequence belongs to the TRAFAC class YlqF/YawG GTPase family. LSG1 subfamily. As to expression, expressed in larval serotonergic neurons.

It localises to the cytoplasm. GTPase required for the nuclear export of the 60S ribosomal subunit. Probably acts by mediating the release of Nmd3 from the 60S ribosomal subunit after export into the cytoplasm. Regulator of body size; acts in serotonergic neurons to regulate insulin signaling and thus exerts global growth control. This chain is Large subunit GTPase 1 homolog (Ns3), found in Drosophila melanogaster (Fruit fly).